The following is a 158-amino-acid chain: Transcription elongation factor GreB (158 aa).

Residues 53–75 (KRRLREIDRRVRFLTKRLEVLQI) are a coiled coil.

Belongs to the GreA/GreB family. GreB subfamily.

In terms of biological role, necessary for efficient RNA polymerase transcription elongation past template-encoded arresting sites. The arresting sites in DNA have the property of trapping a certain fraction of elongating RNA polymerases that pass through, resulting in locked ternary complexes. Cleavage of the nascent transcript by cleavage factors such as GreA or GreB allows the resumption of elongation from the new 3'terminus. GreB releases sequences of up to 9 nucleotides in length. This chain is Transcription elongation factor GreB, found in Pasteurella multocida (strain Pm70).